The following is a 132-amino-acid chain: D-ribose pyranase (132 aa).

The active-site Proton donor is histidine 20. Substrate-binding positions include aspartate 28, histidine 99, and 121-123 (YSN).

Belongs to the RbsD / FucU family. RbsD subfamily. In terms of assembly, homodecamer.

The protein localises to the cytoplasm. It carries out the reaction beta-D-ribopyranose = beta-D-ribofuranose. The protein operates within carbohydrate metabolism; D-ribose degradation; D-ribose 5-phosphate from beta-D-ribopyranose: step 1/2. Functionally, catalyzes the interconversion of beta-pyran and beta-furan forms of D-ribose. The chain is D-ribose pyranase from Lactococcus lactis subsp. cremoris (strain SK11).